The chain runs to 397 residues: DNA-directed RNA polymerase subunit Rpo1C (397 aa).

The protein belongs to the RNA polymerase beta' chain family. As to quaternary structure, part of the RNA polymerase complex.

It is found in the cytoplasm. The catalysed reaction is RNA(n) + a ribonucleoside 5'-triphosphate = RNA(n+1) + diphosphate. DNA-dependent RNA polymerase (RNAP) catalyzes the transcription of DNA into RNA using the four ribonucleoside triphosphates as substrates. Forms part of the jaw domain. The protein is DNA-directed RNA polymerase subunit Rpo1C of Pyrococcus abyssi (strain GE5 / Orsay).